The following is a 64-amino-acid chain: MSSHEGGKKKALKQPKKQAKEMDEEEKAFKQKQKEEQKKLEVLKAKVVGKGPLATGGIKKSGKK.

The disordered stretch occupies residues M1 to K38. Basic and acidic residues predominate over residues K27 to K38.

It belongs to the TMA7 family.

The sequence is that of Translation machinery-associated protein 7B from Homo sapiens (Human).